Reading from the N-terminus, the 508-residue chain is Photosystem II CP47 reaction center protein (508 aa).

6 helical membrane passes run 21–36 (AVHI…WAGS), 101–115 (IVFS…IWHW), 140–156 (GIHL…FGAF), 203–218 (IAAG…FHLS), 237–252 (VLSS…AFVV), and 457–472 (TFAL…HGAR).

It belongs to the PsbB/PsbC family. PsbB subfamily. In terms of assembly, PSII is composed of 1 copy each of membrane proteins PsbA, PsbB, PsbC, PsbD, PsbE, PsbF, PsbH, PsbI, PsbJ, PsbK, PsbL, PsbM, PsbT, PsbX, PsbY, PsbZ, Psb30/Ycf12, at least 3 peripheral proteins of the oxygen-evolving complex and a large number of cofactors. It forms dimeric complexes. The cofactor is Binds multiple chlorophylls. PSII binds additional chlorophylls, carotenoids and specific lipids..

The protein resides in the plastid. Its subcellular location is the chloroplast thylakoid membrane. One of the components of the core complex of photosystem II (PSII). It binds chlorophyll and helps catalyze the primary light-induced photochemical processes of PSII. PSII is a light-driven water:plastoquinone oxidoreductase, using light energy to abstract electrons from H(2)O, generating O(2) and a proton gradient subsequently used for ATP formation. The protein is Photosystem II CP47 reaction center protein of Agrostis stolonifera (Creeping bentgrass).